A 558-amino-acid polypeptide reads, in one-letter code: Factor VII-activating protease (558 aa).

The first 23 residues, 1–23 (MFVRMLVFRVLLLIALVGKSVIG), serve as a signal peptide directing secretion. 3 EGF-like domains span residues 71 to 107 (DDDPCQSNPCEHGGDCIIRGDTFSCSCPAPFSGSRCQ), 109 to 146 (AQNKCKDNPCVHGDCLITQKHPYYRCACKYPYTGPDCS), and 148 to 186 (VLPACRPNPCQNGGVCSRHRRRSRFTCACPDQYKGKFCE). 18 disulfide bridges follow: Cys-75–Cys-86, Cys-80–Cys-95, Cys-97–Cys-106, Cys-113–Cys-123, Cys-118–Cys-134, Cys-136–Cys-145, Cys-152–Cys-163, Cys-157–Cys-174, Cys-176–Cys-185, Cys-192–Cys-274, Cys-213–Cys-255, Cys-244–Cys-269, Cys-299–Cys-433, Cys-345–Cys-361, Cys-353–Cys-422, Cys-445–Cys-513, Cys-475–Cys-491, and Cys-503–Cys-531. Residues 191-274 (DCYVGDGYSY…KWEYCDVTVC (84 aa)) form the Kringle domain. A Peptidase S1 domain is found at 312–553 (IYGGFKSTAG…FLNWIKTTMH (242 aa)). Active-site charge relay system residues include His-360 and Asp-409. Ser-507 functions as the Charge relay system in the catalytic mechanism.

The protein belongs to the peptidase S1 family. In terms of assembly, heterodimer; disulfide-linked. Heterodimer of a 50 kDa heavy and a 27 kDa light chain linked by a disulfide bond. Post-translationally, proteolytic cleavage at Gly-23 or Met-27 can give rise to the 50 kDa heavy chain (HC) and cleavage at Arg-311 or Lys-317 can give rise to the 27 kDa light chain (LC). The HC can undergo further proteolytic cleavage giving rise to a 26 kDa fragment. The LC can undergo further proteolytic cleavage at Arg-311 leading to a 17-kDa fragment and at Arg-478 leading to a 8-kDa fragment. Liver and kidney.

The protein resides in the secreted. Functionally, cleaves the alpha-chain at multiple sites and the beta-chain between 'Lys-53' and 'Lys-54' but not the gamma-chain of fibrinogen and therefore does not initiate the formation of the fibrin clot and does not cause the fibrinolysis directly. It does not cleave (activate) prothrombin and plasminogen but converts the inactive single chain urinary plasminogen activator (pro-urokinase) to the active two chain form. Activates coagulation factor VII. May function as a tumor suppressor negatively regulating cell proliferation and cell migration. This chain is Factor VII-activating protease, found in Mus musculus (Mouse).